The chain runs to 122 residues: UPF0382 membrane protein SE_0353 (122 aa).

Helical transmembrane passes span 3–23 (VFII…AFGA), 46–66 (MYHG…SINV), 69–89 (AGWL…FLAL), and 98–118 (ITPI…IATL).

This sequence belongs to the UPF0382 family.

Its subcellular location is the cell membrane. The sequence is that of UPF0382 membrane protein SE_0353 from Staphylococcus epidermidis (strain ATCC 12228 / FDA PCI 1200).